The following is a 594-amino-acid chain: F-box/LRR-repeat protein At3g58980 (594 aa).

The region spanning 1–49 is the F-box domain; that stretch reads MDRISNLPNEIICHIVSFLSAKEAAFASILSKRWRNLFTIVIKLQFDDS. LRR repeat units follow at residues 103-125, 128-151, 152-174, 203-218, 219-242, 249-272, 288-314, 315-339, 344-369, 403-414, 415-437, 450-474, 503-518, 519-541, and 584-594; these read ILDL…VFTC, LVKL…DAFL, PALE…AFEK, SPTL…DLYE, CEFT…AVPD, LDSL…GYVD, LRNV…AIPV, FKNL…FLPF, CPNL…VCHC, LEKLSGLKLVKL, HSLT…SSKC, LPSL…AFQK, SQTL…YWAE, HNLE…AHVP, and LRNVEILRLWM.

This Arabidopsis thaliana (Mouse-ear cress) protein is F-box/LRR-repeat protein At3g58980.